The chain runs to 506 residues: ATP synthase subunit alpha (506 aa).

Residue 170–177 (GDRQTGKT) coordinates ATP.

This sequence belongs to the ATPase alpha/beta chains family. In terms of assembly, F-type ATPases have 2 components, CF(1) - the catalytic core - and CF(0) - the membrane proton channel. CF(1) has five subunits: alpha(3), beta(3), gamma(1), delta(1), epsilon(1). CF(0) has four main subunits: a(1), b(1), b'(1) and c(9-12).

It localises to the cellular thylakoid membrane. It carries out the reaction ATP + H2O + 4 H(+)(in) = ADP + phosphate + 5 H(+)(out). Functionally, produces ATP from ADP in the presence of a proton gradient across the membrane. The alpha chain is a regulatory subunit. The sequence is that of ATP synthase subunit alpha from Synechococcus sp. (strain JA-3-3Ab) (Cyanobacteria bacterium Yellowstone A-Prime).